The primary structure comprises 227 residues: ATP synthase F(0) complex subunit a (227 aa).

Helical transmembrane passes span F14 to P34, L73 to F93, Q98 to M118, A137 to L157, V179 to L199, and L203 to L223.

The protein belongs to the ATPase A chain family. Component of the ATP synthase complex composed at least of ATP5F1A/subunit alpha, ATP5F1B/subunit beta, ATP5MC1/subunit c (homooctomer), MT-ATP6/subunit a, MT-ATP8/subunit 8, ATP5ME/subunit e, ATP5MF/subunit f, ATP5MG/subunit g, ATP5MK/subunit k, ATP5MJ/subunit j, ATP5F1C/subunit gamma, ATP5F1D/subunit delta, ATP5F1E/subunit epsilon, ATP5PF/subunit F6, ATP5PB/subunit b, ATP5PD/subunit d, ATP5PO/subunit OSCP. ATP synthase complex consists of a soluble F(1) head domain (subunits alpha(3) and beta(3)) - the catalytic core - and a membrane F(0) domain - the membrane proton channel (subunits c, a, 8, e, f, g, k and j). These two domains are linked by a central stalk (subunits gamma, delta, and epsilon) rotating inside the F1 region and a stationary peripheral stalk (subunits F6, b, d, and OSCP). Interacts with DNAJC30; interaction is direct.

The protein resides in the mitochondrion inner membrane. It carries out the reaction H(+)(in) = H(+)(out). Functionally, subunit a, of the mitochondrial membrane ATP synthase complex (F(1)F(0) ATP synthase or Complex V) that produces ATP from ADP in the presence of a proton gradient across the membrane which is generated by electron transport complexes of the respiratory chain. ATP synthase complex consist of a soluble F(1) head domain - the catalytic core - and a membrane F(1) domain - the membrane proton channel. These two domains are linked by a central stalk rotating inside the F(1) region and a stationary peripheral stalk. During catalysis, ATP synthesis in the catalytic domain of F(1) is coupled via a rotary mechanism of the central stalk subunits to proton translocation. With the subunit c (ATP5MC1), forms the proton-conducting channel in the F(0) domain, that contains two crucial half-channels (inlet and outlet) that facilitate proton movement from the mitochondrial intermembrane space (IMS) into the matrix. Protons are taken up via the inlet half-channel and released through the outlet half-channel, following a Grotthuss mechanism. In Gadus morhua (Atlantic cod), this protein is ATP synthase F(0) complex subunit a.